The chain runs to 341 residues: GTPase Obg (341 aa).

In terms of domain architecture, Obg spans 1–159 (MKFLDQAKVY…RAIWLRLKLI (159 aa)). The 168-residue stretch at 160–327 (ADAGLVGLPN…VLRAGAHIIE (168 aa)) folds into the OBG-type G domain. Residues 166 to 173 (GLPNAGKS), 191 to 195 (FTTLH), 212 to 215 (DIPG), 279 to 282 (SQID), and 308 to 310 (SAV) contribute to the GTP site. Positions 173 and 193 each coordinate Mg(2+).

Belongs to the TRAFAC class OBG-HflX-like GTPase superfamily. OBG GTPase family. As to quaternary structure, monomer. Requires Mg(2+) as cofactor.

It localises to the cytoplasm. Functionally, an essential GTPase which binds GTP, GDP and possibly (p)ppGpp with moderate affinity, with high nucleotide exchange rates and a fairly low GTP hydrolysis rate. Plays a role in control of the cell cycle, stress response, ribosome biogenesis and in those bacteria that undergo differentiation, in morphogenesis control. In Bartonella tribocorum (strain CIP 105476 / IBS 506), this protein is GTPase Obg.